The sequence spans 77 residues: Large ribosomal subunit protein bL31 (77 aa).

It belongs to the bacterial ribosomal protein bL31 family. Type A subfamily. As to quaternary structure, part of the 50S ribosomal subunit.

In terms of biological role, binds the 23S rRNA. This Microcystis aeruginosa (strain NIES-843 / IAM M-2473) protein is Large ribosomal subunit protein bL31.